The sequence spans 451 residues: Golgi reassembly-stacking protein 2 (451 aa).

A lipid anchor (N-myristoyl glycine) is attached at glycine 2. PDZ GRASP-type domains are found at residues 15–105 (EGYH…FCSF) and 111–199 (NVWH…YGYL). Residues 15–215 (EGYHVLRVQE…PFEEGKKISL (201 aa)) form a GRASP region. Dimethylated arginine is present on residues arginine 30 and arginine 47. Residues 194–199 (IGYGYL) are important for membrane binding. A Phosphoserine modification is found at serine 214. The residue at position 222 (threonine 222) is a Phosphothreonine. Residue threonine 225 is modified to Phosphothreonine; by MAPK. A compositionally biased stretch (low complexity) spans 236–252 (LSSVSPPSLSPPGTTGV). 2 disordered regions span residues 236 to 255 (LSSV…VEQS) and 377 to 451 (EGSS…SEPS). A compositionally biased stretch (polar residues) spans 410 to 424 (SSLTVDVTSPASKVP). Serine 411 bears the Phosphoserine mark. Residues threonine 417 and threonine 435 each carry the phosphothreonine modification. Serine 443 and serine 448 each carry phosphoserine.

This sequence belongs to the GORASP family. As to quaternary structure, homodimer. Homooligomer. ER stress induces phosphorylation-dependent monomerization. Interacts with BLZF1/Golgin 45. Identified in a complex with RAB2 and GORASP2. Interacts with JAM2 and JAM3. Interacts with members of the p24 cargo receptors. Interacts with CNIH and the cytoplasmic domain of transmembrane TGFA, prior its transit in the trans-Golgi. Interacts with KCTD5. Interacts with TMED2 and TMED3. Interacts with SEC16A in response to ER stress. Interacts (via PDZ GRASP-type 1 domain) with core-glycosylated CFTR in response to ER stress. Post-translationally, myristoylated. Myristoylation is essential for the Golgi targeting. Palmitoylated. In terms of processing, phosphorylated in mitotic cells. ER stress-induced phosphorylation at Ser-443 induces monomerization and subsequent relocalization from Golgi to ER which is essential for mediating unconventional (ER/Golgi-independent) trafficking of CFTR to the cell membrane. Detected in lung, heart and testis. Colocalized in a polarized fashion in the acrosome region with JAM3 in round spermatids (at protein level).

It is found in the golgi apparatus membrane. The protein resides in the endoplasmic reticulum membrane. The protein localises to the golgi apparatus. Key structural protein of the Golgi apparatus. The membrane cisternae of the Golgi apparatus adhere to each other to form stacks, which are aligned side by side to form the Golgi ribbon. Acting in concert with GORASP1/GRASP65, is required for the formation and maintenance of the Golgi ribbon, and may be dispensable for the formation of stacks. However, other studies suggest that GORASP2 plays a role in assembly and membrane stacking of the Golgi cisternae, and in the process by which Golgi stacks reform after breakdown during mitosis and meiosis. May regulate the intracellular transport and presentation of a defined set of transmembrane proteins, such as transmembrane TGFA. Required for normal acrosome formation during spermiogenesis and normal male fertility, probably by promoting colocalization of JAM2 and JAM3 at contact sites between germ cells and Sertoli cells. Mediates ER stress-induced unconventional (ER/Golgi-independent) trafficking of core-glycosylated CFTR to cell membrane. The protein is Golgi reassembly-stacking protein 2 (Gorasp2) of Mus musculus (Mouse).